A 119-amino-acid chain; its full sequence is MARVKRAMNARKKHKKILKLSKGYFGGKSRLFKTANESVIRALRNAYTGRKLKKRDYRKLWIARINAATRANGLSYSRFMNGLKLAGIDMNRKMLSEIAINDPKAFSELVEAAKKQLNA.

Belongs to the bacterial ribosomal protein bL20 family.

Binds directly to 23S ribosomal RNA and is necessary for the in vitro assembly process of the 50S ribosomal subunit. It is not involved in the protein synthesizing functions of that subunit. This Clostridium tetani (strain Massachusetts / E88) protein is Large ribosomal subunit protein bL20.